The primary structure comprises 219 residues: Glutathione S-transferase F13 (219 aa).

Positions 2–82 (AMKLYGDEMS…YIAEKHRDKG (81 aa)) constitute a GST N-terminal domain. Glutathione contacts are provided by residues 11–12 (SA), 40–41 (HK), 53–54 (KV), and 66–67 (ES). The region spanning 90-217 (DPKEAAIVKL…VSPGLTVAPT (128 aa)) is the GST C-terminal domain.

It belongs to the GST superfamily. Phi family.

The protein localises to the cytoplasm. The protein resides in the cytosol. It catalyses the reaction RX + glutathione = an S-substituted glutathione + a halide anion + H(+). In terms of biological role, may be involved in the conjugation of reduced glutathione to a wide number of exogenous and endogenous hydrophobic electrophiles and have a detoxification role against certain herbicides. The protein is Glutathione S-transferase F13 (GSTF13) of Arabidopsis thaliana (Mouse-ear cress).